Here is a 247-residue protein sequence, read N- to C-terminus: Acetoacetate decarboxylase (247 aa).

Catalysis depends on Lys-116, which acts as the Schiff-base intermediate with acetoacetate.

The protein belongs to the ADC family.

The enzyme catalyses acetoacetate + H(+) = acetone + CO2. Functionally, catalyzes the conversion of acetoacetate to acetone and carbon dioxide. This chain is Acetoacetate decarboxylase, found in Ralstonia nicotianae (strain ATCC BAA-1114 / GMI1000) (Ralstonia solanacearum).